The primary structure comprises 369 residues: Probable trehalose-phosphate phosphatase I (369 aa).

The protein belongs to the trehalose phosphatase family. A divalent metal cation serves as cofactor.

The enzyme catalyses alpha,alpha-trehalose 6-phosphate + H2O = alpha,alpha-trehalose + phosphate. Its pathway is glycan biosynthesis; trehalose biosynthesis. Functionally, removes the phosphate from trehalose 6-phosphate to produce free trehalose. Trehalose accumulation in plant may improve abiotic stress tolerance. The chain is Probable trehalose-phosphate phosphatase I (TPPI) from Arabidopsis thaliana (Mouse-ear cress).